A 185-amino-acid chain; its full sequence is Large ribosomal subunit protein uL5 (185 aa).

It belongs to the universal ribosomal protein uL5 family. In terms of assembly, part of the 50S ribosomal subunit; part of the 5S rRNA/L5/L18/L25 subcomplex. Contacts the 5S rRNA and the P site tRNA. Forms a bridge to the 30S subunit in the 70S ribosome.

Functionally, this is one of the proteins that bind and probably mediate the attachment of the 5S RNA into the large ribosomal subunit, where it forms part of the central protuberance. In the 70S ribosome it contacts protein S13 of the 30S subunit (bridge B1b), connecting the 2 subunits; this bridge is implicated in subunit movement. Contacts the P site tRNA; the 5S rRNA and some of its associated proteins might help stabilize positioning of ribosome-bound tRNAs. This Bradyrhizobium diazoefficiens (strain JCM 10833 / BCRC 13528 / IAM 13628 / NBRC 14792 / USDA 110) protein is Large ribosomal subunit protein uL5.